The chain runs to 200 residues: Small ribosomal subunit protein uS4 (200 aa).

A disordered region spans residues 22–42 (TGKELEKRPYAPGPHGPGQRK). The 61-residue stretch at 92 to 152 (SRLDNIVYRL…EKSQNLSVVK (61 aa)) folds into the S4 RNA-binding domain.

The protein belongs to the universal ribosomal protein uS4 family. In terms of assembly, part of the 30S ribosomal subunit. Contacts protein S5. The interaction surface between S4 and S5 is involved in control of translational fidelity.

Functionally, one of the primary rRNA binding proteins, it binds directly to 16S rRNA where it nucleates assembly of the body of the 30S subunit. In terms of biological role, with S5 and S12 plays an important role in translational accuracy. In Bacillus licheniformis (strain ATCC 14580 / DSM 13 / JCM 2505 / CCUG 7422 / NBRC 12200 / NCIMB 9375 / NCTC 10341 / NRRL NRS-1264 / Gibson 46), this protein is Small ribosomal subunit protein uS4.